Consider the following 88-residue polypeptide: Small ribosomal subunit protein bS18 (88 aa).

Residues 1–22 (MSTKNAKPKKEAQRRPSRKAKV) form a disordered region.

It belongs to the bacterial ribosomal protein bS18 family. As to quaternary structure, part of the 30S ribosomal subunit. Forms a tight heterodimer with protein bS6.

Binds as a heterodimer with protein bS6 to the central domain of the 16S rRNA, where it helps stabilize the platform of the 30S subunit. The chain is Small ribosomal subunit protein bS18 (rpsR) from Thermus thermophilus (strain ATCC BAA-163 / DSM 7039 / HB27).